A 554-amino-acid polypeptide reads, in one-letter code: Glucose-6-phosphate isomerase (554 aa).

Glu-358 serves as the catalytic Proton donor. Catalysis depends on residues His-389 and Lys-515. The span at 527 to 540 (SDGSPQRQSDSSTD) shows a compositional bias: polar residues. Positions 527–554 (SDGSPQRQSDSSTDALVRRYRTQRGRTG) are disordered. The span at 544–554 (RRYRTQRGRTG) shows a compositional bias: basic residues.

It belongs to the GPI family.

It is found in the cytoplasm. The catalysed reaction is alpha-D-glucose 6-phosphate = beta-D-fructose 6-phosphate. Its pathway is carbohydrate biosynthesis; gluconeogenesis. It functions in the pathway carbohydrate degradation; glycolysis; D-glyceraldehyde 3-phosphate and glycerone phosphate from D-glucose: step 2/4. Its function is as follows. Catalyzes the reversible isomerization of glucose-6-phosphate to fructose-6-phosphate. In Mycobacterium ulcerans (strain Agy99), this protein is Glucose-6-phosphate isomerase.